The chain runs to 411 residues: Argininosuccinate synthase (411 aa).

An ATP-binding site is contributed by 11–19 (AYSGGLDTS). Residue Y88 coordinates L-citrulline. G118 lines the ATP pocket. L-aspartate contacts are provided by T120, N124, and D125. N124 lines the L-citrulline pocket. Positions 128, 176, 261, and 273 each coordinate L-citrulline.

It belongs to the argininosuccinate synthase family. Type 1 subfamily. In terms of assembly, homotetramer.

Its subcellular location is the cytoplasm. It carries out the reaction L-citrulline + L-aspartate + ATP = 2-(N(omega)-L-arginino)succinate + AMP + diphosphate + H(+). It functions in the pathway amino-acid biosynthesis; L-arginine biosynthesis; L-arginine from L-ornithine and carbamoyl phosphate: step 2/3. In Lactiplantibacillus plantarum (strain ATCC BAA-793 / NCIMB 8826 / WCFS1) (Lactobacillus plantarum), this protein is Argininosuccinate synthase.